We begin with the raw amino-acid sequence, 302 residues long: 4-diphosphocytidyl-2-C-methyl-D-erythritol kinase (302 aa).

The active site involves lysine 11. 93 to 103 (PVASGLAGGST) provides a ligand contact to ATP. Residue aspartate 135 is part of the active site.

This sequence belongs to the GHMP kinase family. IspE subfamily.

The catalysed reaction is 4-CDP-2-C-methyl-D-erythritol + ATP = 4-CDP-2-C-methyl-D-erythritol 2-phosphate + ADP + H(+). The protein operates within isoprenoid biosynthesis; isopentenyl diphosphate biosynthesis via DXP pathway; isopentenyl diphosphate from 1-deoxy-D-xylulose 5-phosphate: step 3/6. Catalyzes the phosphorylation of the position 2 hydroxy group of 4-diphosphocytidyl-2C-methyl-D-erythritol. The polypeptide is 4-diphosphocytidyl-2-C-methyl-D-erythritol kinase (Gloeobacter violaceus (strain ATCC 29082 / PCC 7421)).